A 229-amino-acid polypeptide reads, in one-letter code: Potassium/proton antiporter CemA (229 aa).

A run of 3 helical transmembrane segments spans residues 6–26, 107–127, and 189–209; these read AFIP…ISLC, ILHF…SFWG, and ILSG…KYWI.

It belongs to the CemA family.

It localises to the plastid. The protein localises to the chloroplast inner membrane. It catalyses the reaction K(+)(in) + H(+)(out) = K(+)(out) + H(+)(in). Contributes to K(+)/H(+) antiport activity by supporting proton efflux to control proton extrusion and homeostasis in chloroplasts in a light-dependent manner to modulate photosynthesis. Prevents excessive induction of non-photochemical quenching (NPQ) under continuous-light conditions. Indirectly promotes efficient inorganic carbon uptake into chloroplasts. This Lepidium virginicum (Virginia pepperweed) protein is Potassium/proton antiporter CemA.